The primary structure comprises 48 residues: DNA gyrase inhibitor YacG (48 aa).

Zn(2+)-binding residues include Cys9, Cys12, Cys28, and Cys32.

The protein belongs to the DNA gyrase inhibitor YacG family. In terms of assembly, interacts with GyrB. The cofactor is Zn(2+).

Its function is as follows. Inhibits all the catalytic activities of DNA gyrase by preventing its interaction with DNA. Acts by binding directly to the C-terminal domain of GyrB, which probably disrupts DNA binding by the gyrase. The polypeptide is DNA gyrase inhibitor YacG (Wigglesworthia glossinidia brevipalpis).